Here is a 470-residue protein sequence, read N- to C-terminus: Dynein axonemal assembly factor 11 (470 aa).

LRR repeat units follow at residues isoleucine 20–cysteine 43, arginine 44–leucine 65, lysine 66–serine 89, and leucine 90–glutamine 110. The LRRCT domain occupies tyrosine 128 to aspartate 146. A coiled-coil region spans residues leucine 177–lysine 288. Residues alanine 182–glutamate 265 form a disordered region. Over residues lysine 194 to tyrosine 213 the composition is skewed to basic and acidic residues. One can recognise a CS domain in the interval valine 303–lysine 395. The interval histidine 447–valine 470 is disordered.

It belongs to the tilB family.

The protein localises to the cytoplasm. It localises to the cell projection. It is found in the cilium. Its subcellular location is the dynein axonemal particle. The protein resides in the flagellum. Functionally, involved in dynein arm assembly, is important for expression and transporting outer dynein arm (ODA) proteins from the cytoplasm to the cilia. This is Dynein axonemal assembly factor 11 (dnaaf11) from Xenopus tropicalis (Western clawed frog).